Reading from the N-terminus, the 1083-residue chain is Histone-lysine N-methyltransferase ATX2 (1083 aa).

The Nuclear localization signal motif lies at 77-84 (HRRPEIVH). Positions 315–379 (PRDIIWAKLT…VKQAVSFLKG (65 aa)) constitute a PWWP domain. Positions 422–443 (TDCSERINSGEEDSSNSGDDYT) are disordered. Residues 457–516 (DCLHRIGDLQIINLGRIVTDSEFFKDSKHTWPEGYTATRKFISLKDPNASAMYKMEVLRD) form the FYR N-terminal domain. One can recognise an FYR C-terminal domain in the interval 520 to 604 (KTRPVFRVTT…PPSKVSQRKY (85 aa)). The segment at 626–677 (LDKCNVCHMDEEYENNLFLQCDKCRMMVHTRCYGQLEPHNGILWLCNLCRPV) adopts a PHD-type 1 zinc-finger fold. A C2HC pre-PHD-type zinc finger spans residues 682–715 (PPRCCLCPVVGGAMKPTTDGRWAHLACAIWIPET). The extended PHD domain (ePHD) stretch occupies residues 682 to 807 (PPRCCLCPVV…RLLSFCKRHR (126 aa)). The PHD-type 2 zinc-finger motif lies at 739–807 (LLCSICGVSY…RLLSFCKRHR (69 aa)). The region spanning 919–1037 (KRLAFGKSGI…KWEELTYDYR (119 aa)) is the SET domain. S-adenosyl-L-methionine is bound at residue H929. O-linked (GlcNAc) serine glycosylation is present at S968. Residues Y975 and 998–999 (NH) each bind S-adenosyl-L-methionine. C1001 contacts Zn(2+). Y1036 lines the S-adenosyl-L-methionine pocket. Positions 1043 to 1059 (ERLACYCGFPRCRGVVN) constitute a Post-SET domain. C1047, C1049, and C1054 together coordinate Zn(2+).

Belongs to the class V-like SAM-binding methyltransferase superfamily. Histone-lysine methyltransferase family. TRX/MLL subfamily. In terms of processing, activated via O-glycosylation. In terms of tissue distribution, expressed in roots, leaves and flowers and, to a lower extent, in young seedlings.

It localises to the nucleus. The catalysed reaction is N(6)-methyl-L-lysyl-[histone] + S-adenosyl-L-methionine = N(6),N(6)-dimethyl-L-lysyl-[histone] + S-adenosyl-L-homocysteine + H(+). Histone methyltransferase. Dimethylates 'Lys-4' of histone H3 (H3K4me2). H3 'Lys-4' methylation represents a specific tag for epigenetic transcriptional activation. Methylates only a limited fraction of nucleosomes of target genes (e.g. NAP and XTH33). Involved in epigenetic regulation of the floral repressor FLC and FT to prevent the transition from vegetative to reproductive development. The chain is Histone-lysine N-methyltransferase ATX2 from Arabidopsis thaliana (Mouse-ear cress).